A 519-amino-acid polypeptide reads, in one-letter code: Dihydropyrimidinase (519 aa).

2 residues coordinate Zn(2+): His67 and His69. At Ser79 the chain carries Phosphoserine. Lys159 contacts Zn(2+). N6-carboxylysine is present on Lys159. Tyr164 contacts substrate. Zn(2+) is bound by residues His192 and His248. An N6-succinyllysine modification is found at Lys256. Asp326 provides a ligand contact to Zn(2+). Residue Asn347 participates in substrate binding. At Thr510 the chain carries Phosphothreonine.

The protein belongs to the metallo-dependent hydrolases superfamily. Hydantoinase/dihydropyrimidinase family. In terms of assembly, homotetramer. The cofactor is Zn(2+). In terms of processing, carboxylation allows a single lysine to coordinate two zinc ions.

The catalysed reaction is 5,6-dihydrouracil + H2O = 3-(carbamoylamino)propanoate + H(+). Its function is as follows. Catalyzes the second step of the reductive pyrimidine degradation, the reversible hydrolytic ring opening of dihydropyrimidines. Can catalyze the ring opening of 5,6-dihydrouracil to N-carbamyl-alanine and of 5,6-dihydrothymine to N-carbamyl-amino isobutyrate. The polypeptide is Dihydropyrimidinase (Dpys) (Rattus norvegicus (Rat)).